A 291-amino-acid polypeptide reads, in one-letter code: ATP synthase gamma chain (291 aa).

It belongs to the ATPase gamma chain family. As to quaternary structure, F-type ATPases have 2 components, CF(1) - the catalytic core - and CF(0) - the membrane proton channel. CF(1) has five subunits: alpha(3), beta(3), gamma(1), delta(1), epsilon(1). CF(0) has three main subunits: a, b and c.

Its subcellular location is the cell inner membrane. Produces ATP from ADP in the presence of a proton gradient across the membrane. The gamma chain is believed to be important in regulating ATPase activity and the flow of protons through the CF(0) complex. This is ATP synthase gamma chain from Cupriavidus necator (strain ATCC 17699 / DSM 428 / KCTC 22496 / NCIMB 10442 / H16 / Stanier 337) (Ralstonia eutropha).